The chain runs to 458 residues: 3-isopropylmalate dehydratase large subunit (458 aa).

Residues C339, C399, and C402 each contribute to the [4Fe-4S] cluster site.

This sequence belongs to the aconitase/IPM isomerase family. LeuC type 1 subfamily. In terms of assembly, heterodimer of LeuC and LeuD. Requires [4Fe-4S] cluster as cofactor.

The enzyme catalyses (2R,3S)-3-isopropylmalate = (2S)-2-isopropylmalate. It participates in amino-acid biosynthesis; L-leucine biosynthesis; L-leucine from 3-methyl-2-oxobutanoate: step 2/4. In terms of biological role, catalyzes the isomerization between 2-isopropylmalate and 3-isopropylmalate, via the formation of 2-isopropylmaleate. The sequence is that of 3-isopropylmalate dehydratase large subunit from Lactococcus lactis subsp. cremoris (strain MG1363).